Consider the following 355-residue polypeptide: Class E basic helix-loop-helix protein 22 (355 aa).

Disordered stretches follow at residues alanine 34–glycine 90 and glycine 128–lysine 215. Composition is skewed to gly residues over residues glycine 81–glycine 90 and glycine 185–serine 207. Residues alanine 216–glutamine 270 enclose the bHLH domain.

As to quaternary structure, interacts with PRDM8. As to expression, brain-specific, with the highest expression in the cerebellum.

The protein localises to the nucleus. Functionally, inhibits DNA binding of TCF3/E47 homodimers and TCF3 (E47)/NEUROD1 heterodimers and acts as a strong repressor of Neurod1 and Myod-responsive genes, probably by heterodimerization with class a basic helix-loop-helix factors. Despite the presence of an intact basic domain, does not bind to DNA. In the brain, may function as an area-specific transcription factor that regulates the postmitotic acquisition of area identities and elucidate the genetic hierarchy between progenitors and postmitotic neurons driving neocortical arealization. May be required for the survival of a specific population of inhibitory neurons in the superficial laminae of the spinal cord dorsal horn that may regulate pruritis. Seems to play a crucial role in the retinogenesis, in the specification of amacrine and bipolar subtypes. Forms with PRDM8 a transcriptional repressor complex controlling genes involved in neural development and neuronal differentiation. In Mus musculus (Mouse), this protein is Class E basic helix-loop-helix protein 22 (Bhlhe22).